The following is a 346-amino-acid chain: MKFNKISLSVSTALLAAGLAVSGSANAKGRLVVYCSATNILCETTTKAFGEKYDVKTSFIRNGSGSTFAKVEAEKNNPQADVWFGGTFDPQAQAAELGLIEPYKSKHIDEIVERFREPAKTKGHYVSSIYMGILGFGVNTERLAKLGIKEVPKCWKDLTDPRLKGEVQIADPQSAGTAYTALATFVQLWGEKEAFDFLKELHPNVSQYTKSGITPSRNSARGEATIGVGFLHDYALEKRNGAPLELVVPCEGTGYELGGVSILKGARNIDNAKLFVDWALSKEGQELAWKQGDSLQILTNTTAEQSPTAFDPNKLKLINYDFEKYGATEQRKALIEKWVQEVKLAK.

Residues 1 to 27 (MKFNKISLSVSTALLAAGLAVSGSANA) form the signal peptide.

This is an uncharacterized protein from Haemophilus influenzae (strain ATCC 51907 / DSM 11121 / KW20 / Rd).